Consider the following 326-residue polypeptide: Trans-L-3-hydroxyproline dehydratase (326 aa).

Catalysis depends on cysteine 80, which acts as the Proton acceptor. Residues 81–82 (GH), aspartate 241, and 246–247 (GS) contribute to the substrate site.

This sequence belongs to the proline racemase family. Homodimer.

It catalyses the reaction trans-3-hydroxy-L-proline = 1-pyrroline-2-carboxylate + H2O. Functionally, catalyzes the dehydration of trans-3-hydroxy-L-proline to delta-1-pyrroline-2-carboxylate (Pyr2C). In Saccoglossus kowalevskii (Acorn worm), this protein is Trans-L-3-hydroxyproline dehydratase (l3hypdh).